We begin with the raw amino-acid sequence, 180 residues long: Large ribosomal subunit protein uL5 (180 aa).

This sequence belongs to the universal ribosomal protein uL5 family. Part of the 50S ribosomal subunit; part of the 5S rRNA/L5/L18/L25 subcomplex. Contacts the 5S rRNA and the P site tRNA. Forms a bridge to the 30S subunit in the 70S ribosome.

Functionally, this is one of the proteins that bind and probably mediate the attachment of the 5S RNA into the large ribosomal subunit, where it forms part of the central protuberance. In the 70S ribosome it contacts protein S13 of the 30S subunit (bridge B1b), connecting the 2 subunits; this bridge is implicated in subunit movement. Contacts the P site tRNA; the 5S rRNA and some of its associated proteins might help stabilize positioning of ribosome-bound tRNAs. This Chlamydia caviae (strain ATCC VR-813 / DSM 19441 / 03DC25 / GPIC) (Chlamydophila caviae) protein is Large ribosomal subunit protein uL5.